The chain runs to 323 residues: tRNA dimethylallyltransferase (323 aa).

Residue 21 to 28 (GPTACNKS) coordinates ATP. Residue 23–28 (TACNKS) participates in substrate binding. Interaction with substrate tRNA regions lie at residues 46-49 (DSAL), 171-175 (QRVLR), and 252-257 (RCVGYR).

It belongs to the IPP transferase family. Monomer. Mg(2+) serves as cofactor.

The enzyme catalyses adenosine(37) in tRNA + dimethylallyl diphosphate = N(6)-dimethylallyladenosine(37) in tRNA + diphosphate. Catalyzes the transfer of a dimethylallyl group onto the adenine at position 37 in tRNAs that read codons beginning with uridine, leading to the formation of N6-(dimethylallyl)adenosine (i(6)A). This chain is tRNA dimethylallyltransferase, found in Buchnera aphidicola subsp. Baizongia pistaciae (strain Bp).